Here is an 84-residue protein sequence, read N- to C-terminus: Small ribosomal subunit protein bS20 (84 aa).

The segment at 1 to 32 is disordered; the sequence is MPRHESAKKRMRQNEKRQKRNKSQKSRVRTKI.

Belongs to the bacterial ribosomal protein bS20 family.

In terms of biological role, binds directly to 16S ribosomal RNA. This is Small ribosomal subunit protein bS20 from Salinibacter ruber (strain DSM 13855 / M31).